We begin with the raw amino-acid sequence, 219 residues long: Ribosomal RNA large subunit methyltransferase E (219 aa).

Positions 60, 62, 85, 101, and 126 each coordinate S-adenosyl-L-methionine. Catalysis depends on K166, which acts as the Proton acceptor.

Belongs to the class I-like SAM-binding methyltransferase superfamily. RNA methyltransferase RlmE family.

The protein resides in the cytoplasm. The catalysed reaction is uridine(2552) in 23S rRNA + S-adenosyl-L-methionine = 2'-O-methyluridine(2552) in 23S rRNA + S-adenosyl-L-homocysteine + H(+). In terms of biological role, specifically methylates the uridine in position 2552 of 23S rRNA at the 2'-O position of the ribose in the fully assembled 50S ribosomal subunit. In Bordetella avium (strain 197N), this protein is Ribosomal RNA large subunit methyltransferase E.